Reading from the N-terminus, the 64-residue chain is Small ribosomal subunit protein bS21 (64 aa).

The protein belongs to the bacterial ribosomal protein bS21 family.

The chain is Small ribosomal subunit protein bS21 from Oenococcus oeni (strain ATCC BAA-331 / PSU-1).